The sequence spans 199 residues: Probable chemoreceptor glutamine deamidase CheD (199 aa).

The protein belongs to the CheD family.

The catalysed reaction is L-glutaminyl-[protein] + H2O = L-glutamyl-[protein] + NH4(+). Probably deamidates glutamine residues to glutamate on methyl-accepting chemotaxis receptors (MCPs), playing an important role in chemotaxis. The polypeptide is Probable chemoreceptor glutamine deamidase CheD (Cereibacter sphaeroides (Rhodobacter sphaeroides)).